Reading from the N-terminus, the 154-residue chain is SsrA-binding protein (154 aa).

The tract at residues 132-154 (KRESIKKRQDKRDMERALKRGAE) is disordered.

It belongs to the SmpB family.

It localises to the cytoplasm. In terms of biological role, required for rescue of stalled ribosomes mediated by trans-translation. Binds to transfer-messenger RNA (tmRNA), required for stable association of tmRNA with ribosomes. tmRNA and SmpB together mimic tRNA shape, replacing the anticodon stem-loop with SmpB. tmRNA is encoded by the ssrA gene; the 2 termini fold to resemble tRNA(Ala) and it encodes a 'tag peptide', a short internal open reading frame. During trans-translation Ala-aminoacylated tmRNA acts like a tRNA, entering the A-site of stalled ribosomes, displacing the stalled mRNA. The ribosome then switches to translate the ORF on the tmRNA; the nascent peptide is terminated with the 'tag peptide' encoded by the tmRNA and targeted for degradation. The ribosome is freed to recommence translation, which seems to be the essential function of trans-translation. The polypeptide is SsrA-binding protein (Acaryochloris marina (strain MBIC 11017)).